Here is a 199-residue protein sequence, read N- to C-terminus: Probable molybdenum cofactor guanylyltransferase (199 aa).

GTP-binding positions include 9–11, Lys-21, Asp-69, and Asp-100; that span reads LAG. Asp-100 contributes to the Mg(2+) binding site.

This sequence belongs to the MobA family. The cofactor is Mg(2+).

The protein resides in the cytoplasm. It carries out the reaction Mo-molybdopterin + GTP + H(+) = Mo-molybdopterin guanine dinucleotide + diphosphate. Transfers a GMP moiety from GTP to Mo-molybdopterin (Mo-MPT) cofactor (Moco or molybdenum cofactor) to form Mo-molybdopterin guanine dinucleotide (Mo-MGD) cofactor. This is Probable molybdenum cofactor guanylyltransferase from Bacillus cytotoxicus (strain DSM 22905 / CIP 110041 / 391-98 / NVH 391-98).